Here is a 280-residue protein sequence, read N- to C-terminus: MSFSVQIKHELATNPLIKTEWSSFLAGYFQNGLKLLATGQWSFKTSTATLKALFSNALQFSFQIHETSTHCEFSFRASQTEVDQLLAFDATQSDLPLQKAYVIGAFLSGGSVSDLLHSSNFHLQISTNNELQIKQLMKLFHPFKQTTKRHQLLVYVKSYQAICDFFKLVEAFDGYLAFEENQLQKNFALEQVRKSNLEIANLMRTLKTSTSTAEQLKILINSADFKKQSLNFQRFCLVKLDHPDWSLEQIAQFFERKYKVQITRSGIQHLNAKLKKLNQN.

The H-T-H motif DNA-binding region spans 246 to 279 (SLEQIAQFFERKYKVQITRSGIQHLNAKLKKLNQ).

This sequence belongs to the WhiA family.

Functionally, involved in cell division and chromosome segregation. The protein is Probable cell division protein WhiA of Mycoplasma pneumoniae (strain ATCC 29342 / M129 / Subtype 1) (Mycoplasmoides pneumoniae).